The following is a 407-amino-acid chain: P2X receptor D (407 aa).

Residues 1–22 (MDWDNIFSYNTAKIVTIKDRRL) lie on the Cytoplasmic side of the membrane. Residues 23-43 (GGLHIIFMVLIIVYIVIYSTI) form a helical membrane-spanning segment. Residues 44–300 (YKKGYLLTET…IQNGEIGSFN (257 aa)) lie on the Lumenal side of the membrane. Residues 283–296 (RHGIRLIFIQNGEI) form a pore-forming motif region. Residues 301–321 (FQALLLTFVSGLGLLAISTVL) traverse the membrane as a helical segment. Residues 322–407 (VDQLAIRFLP…QNIQNNNIIL (86 aa)) are Cytoplasmic-facing. The tract at residues 371 to 394 (KNNENNNNNDDYNDDDNEIFDDNN) is disordered. Over residues 381–391 (DYNDDDNEIFD) the composition is skewed to acidic residues.

It belongs to the P2X receptor family.

The protein resides in the contractile vacuole membrane. In terms of biological role, P2X receptors are ligand-gated ion channels that play a role in intracellular calcium signaling. ATP does not evoke inward currents in p2xD. Not essential for osmoregulation. The protein is P2X receptor D (p2xD) of Dictyostelium discoideum (Social amoeba).